Reading from the N-terminus, the 388-residue chain is Chorismate synthase (388 aa).

Residues R39 and R45 each contribute to the NADP(+) site. Residues 130-132 (RSS), 251-252 (NA), G296, 311-315 (KPIPT), and R337 contribute to the FMN site.

It belongs to the chorismate synthase family. In terms of assembly, homotetramer. The cofactor is FMNH2.

It catalyses the reaction 5-O-(1-carboxyvinyl)-3-phosphoshikimate = chorismate + phosphate. It participates in metabolic intermediate biosynthesis; chorismate biosynthesis; chorismate from D-erythrose 4-phosphate and phosphoenolpyruvate: step 7/7. Functionally, catalyzes the anti-1,4-elimination of the C-3 phosphate and the C-6 proR hydrogen from 5-enolpyruvylshikimate-3-phosphate (EPSP) to yield chorismate, which is the branch point compound that serves as the starting substrate for the three terminal pathways of aromatic amino acid biosynthesis. This reaction introduces a second double bond into the aromatic ring system. The polypeptide is Chorismate synthase (Streptococcus pyogenes serotype M3 (strain SSI-1)).